A 315-amino-acid polypeptide reads, in one-letter code: Isoaspartyl peptidase/L-asparaginase 1 (315 aa).

Position 169 is a phosphoserine (Ser-169). The active-site Nucleophile is Thr-183. Residues Arg-211 to Asp-214 and Thr-233 to Gly-236 contribute to the substrate site.

It belongs to the Ntn-hydrolase family. In terms of assembly, heterotetramer of two alpha and two beta chains arranged as a dimer of alpha/beta heterodimers. In terms of processing, cleaved into an alpha and beta chain by autocatalysis; this activates the enzyme. The N-terminal residue of the beta subunit is responsible for the nucleophile hydrolase activity.

The enzyme catalyses Cleavage of a beta-linked Asp residue from the N-terminus of a polypeptide.. Functionally, acts in asparagine catabolism but also in the final steps of protein and degradation via hydrolysis of a range of isoaspartyl dipeptides. The affinity for Asn and at least 4 isoaspartyl dipeptides (L-beta-Asp-Ala, L-beta-Asp-Gly, L-beta-Asp-Leu, L-beta-Asp-Phe) is quite low, KM being greater than 4.0 mM. The enzyme is inactive on alpha-aspartyl dipeptides. The polypeptide is Isoaspartyl peptidase/L-asparaginase 1 (Arabidopsis thaliana (Mouse-ear cress)).